The primary structure comprises 241 residues: MFYQLNNNMTNKPTIAAIIPAAGVGSRMQHNAPKQYIKLAGKTILEHTLTKLSALAQLNTIVVALNENDPYFEQLPVIDARIVRTCGGKERADSVLNSLLFLAANPPDWVLVHDAARPLVTIDDINTLINECISADEGGILASKVKDTIKRGHIYAEQTVPRDDLWQALTPQFFKYEDLKNALQNALASGAVITDEASAIEWANKPVKLIPGRSDNIKITTPEDLDLAGFLLQKQQNENAL.

It belongs to the IspD/TarI cytidylyltransferase family. IspD subfamily.

It carries out the reaction 2-C-methyl-D-erythritol 4-phosphate + CTP + H(+) = 4-CDP-2-C-methyl-D-erythritol + diphosphate. It participates in isoprenoid biosynthesis; isopentenyl diphosphate biosynthesis via DXP pathway; isopentenyl diphosphate from 1-deoxy-D-xylulose 5-phosphate: step 2/6. Catalyzes the formation of 4-diphosphocytidyl-2-C-methyl-D-erythritol from CTP and 2-C-methyl-D-erythritol 4-phosphate (MEP). This chain is 2-C-methyl-D-erythritol 4-phosphate cytidylyltransferase, found in Pseudoalteromonas translucida (strain TAC 125).